Here is a 691-residue protein sequence, read N- to C-terminus: Pentatricopeptide repeat-containing protein At5g27110 (691 aa).

PPR repeat units lie at residues 38-68, 70-104, 106-140, 141-171, 172-206, 207-241, 242-272, 273-307, 308-342, 343-373, 374-408, 409-443, 444-474, 475-509, 510-540, and 546-576; these read DVVL…FDIR, DVYI…SICV, DSFT…GYVC, DVVV…MPER, DVAS…GFEP, NSVS…GFEL, DEYV…MPRK, SLVA…GTRP, SQTT…VVNA, DIYV…TQKD, VAES…GVKP, DVVT…RLET, DELL…IPKK, DVVS…GLKP, DGVT…MRSK, and IIEH…TPET. Residues 582–657 are type E motif; that stretch reads LLSTLFSACC…KPGCSWIEMS (76 aa). Residues 658–688 form a type E(+) motif region; that stretch reads DKVCHFFAEDRSHLRAENVYECLALLSGHME.

Belongs to the PPR family. PCMP-E subfamily.

In Arabidopsis thaliana (Mouse-ear cress), this protein is Pentatricopeptide repeat-containing protein At5g27110 (PCMP-E14).